Here is a 393-residue protein sequence, read N- to C-terminus: CCA-adding enzyme (393 aa).

Positions 27 and 30 each coordinate ATP. The CTP site is built by Gly-27 and Arg-30. 2 residues coordinate Mg(2+): Asp-40 and Asp-42. ATP-binding residues include Arg-111, Asp-154, Arg-157, Arg-160, and Arg-163. Arg-111, Asp-154, Arg-157, Arg-160, and Arg-163 together coordinate CTP.

It belongs to the tRNA nucleotidyltransferase/poly(A) polymerase family. Bacterial CCA-adding enzyme type 3 subfamily. In terms of assembly, homodimer. It depends on Mg(2+) as a cofactor.

The enzyme catalyses a tRNA precursor + 2 CTP + ATP = a tRNA with a 3' CCA end + 3 diphosphate. It carries out the reaction a tRNA with a 3' CCA end + 2 CTP + ATP = a tRNA with a 3' CCACCA end + 3 diphosphate. Its function is as follows. Catalyzes the addition and repair of the essential 3'-terminal CCA sequence in tRNAs without using a nucleic acid template. Adds these three nucleotides in the order of C, C, and A to the tRNA nucleotide-73, using CTP and ATP as substrates and producing inorganic pyrophosphate. tRNA 3'-terminal CCA addition is required both for tRNA processing and repair. Also involved in tRNA surveillance by mediating tandem CCA addition to generate a CCACCA at the 3' terminus of unstable tRNAs. While stable tRNAs receive only 3'-terminal CCA, unstable tRNAs are marked with CCACCA and rapidly degraded. The chain is CCA-adding enzyme from Listeria innocua serovar 6a (strain ATCC BAA-680 / CLIP 11262).